The chain runs to 332 residues: Succinylglutamate desuccinylase (332 aa).

Zn(2+) contacts are provided by histidine 59, glutamate 62, and histidine 151. Glutamate 215 is a catalytic residue.

The protein belongs to the AspA/AstE family. Succinylglutamate desuccinylase subfamily. It depends on Zn(2+) as a cofactor.

The enzyme catalyses N-succinyl-L-glutamate + H2O = L-glutamate + succinate. It participates in amino-acid degradation; L-arginine degradation via AST pathway; L-glutamate and succinate from L-arginine: step 5/5. In terms of biological role, transforms N(2)-succinylglutamate into succinate and glutamate. The chain is Succinylglutamate desuccinylase from Pseudomonas paraeruginosa (strain DSM 24068 / PA7) (Pseudomonas aeruginosa (strain PA7)).